A 633-amino-acid polypeptide reads, in one-letter code: Chitin synthase regulatory factor 4 (633 aa).

The disordered stretch occupies residues 121 to 151; sequence ATSSQETKRDRPLPNIRNSAPSATRSHSTPC. The span at 136-149 shows a compositional bias: polar residues; the sequence is IRNSAPSATRSHST. A Phosphoserine modification is found at S148. Sel1-like repeat units lie at residues 278-314, 315-346, 438-474, 475-511, and 512-543; these read AKAM…NLGY, TRSL…SEND, SSAQ…KRGE, TEAD…MAGN, and ANAQ…KAGH. Positions 583–613 are disordered; the sequence is ASETSPPHAPAVSSTPVTSAPPVSQTKVTKV. Low complexity predominate over residues 592–613; sequence PAVSSTPVTSAPPVSQTKVTKV.

Its subcellular location is the cytoplasm. Its function is as follows. Involved in septum formation. Required for the proper localization of chs2 at the septum. The chain is Chitin synthase regulatory factor 4 (chr4) from Schizosaccharomyces pombe (strain 972 / ATCC 24843) (Fission yeast).